Reading from the N-terminus, the 318-residue chain is 4-hydroxy-3-methylbut-2-enyl diphosphate reductase (318 aa).

Position 12 (C12) interacts with [4Fe-4S] cluster. Residues H41 and H74 each coordinate (2E)-4-hydroxy-3-methylbut-2-enyl diphosphate. Dimethylallyl diphosphate is bound by residues H41 and H74. H41 and H74 together coordinate isopentenyl diphosphate. Residue C96 coordinates [4Fe-4S] cluster. H124 provides a ligand contact to (2E)-4-hydroxy-3-methylbut-2-enyl diphosphate. Dimethylallyl diphosphate is bound at residue H124. Position 124 (H124) interacts with isopentenyl diphosphate. E126 serves as the catalytic Proton donor. T168 is a (2E)-4-hydroxy-3-methylbut-2-enyl diphosphate binding site. A [4Fe-4S] cluster-binding site is contributed by C198. (2E)-4-hydroxy-3-methylbut-2-enyl diphosphate-binding residues include S226, S227, N228, and S270. Residues S226, S227, N228, and S270 each coordinate dimethylallyl diphosphate. Isopentenyl diphosphate-binding residues include S226, S227, N228, and S270.

Belongs to the IspH family. Requires [4Fe-4S] cluster as cofactor.

The enzyme catalyses isopentenyl diphosphate + 2 oxidized [2Fe-2S]-[ferredoxin] + H2O = (2E)-4-hydroxy-3-methylbut-2-enyl diphosphate + 2 reduced [2Fe-2S]-[ferredoxin] + 2 H(+). It catalyses the reaction dimethylallyl diphosphate + 2 oxidized [2Fe-2S]-[ferredoxin] + H2O = (2E)-4-hydroxy-3-methylbut-2-enyl diphosphate + 2 reduced [2Fe-2S]-[ferredoxin] + 2 H(+). It participates in isoprenoid biosynthesis; dimethylallyl diphosphate biosynthesis; dimethylallyl diphosphate from (2E)-4-hydroxy-3-methylbutenyl diphosphate: step 1/1. The protein operates within isoprenoid biosynthesis; isopentenyl diphosphate biosynthesis via DXP pathway; isopentenyl diphosphate from 1-deoxy-D-xylulose 5-phosphate: step 6/6. Catalyzes the conversion of 1-hydroxy-2-methyl-2-(E)-butenyl 4-diphosphate (HMBPP) into a mixture of isopentenyl diphosphate (IPP) and dimethylallyl diphosphate (DMAPP). Acts in the terminal step of the DOXP/MEP pathway for isoprenoid precursor biosynthesis. This Psychrobacter sp. (strain PRwf-1) protein is 4-hydroxy-3-methylbut-2-enyl diphosphate reductase.